A 114-amino-acid polypeptide reads, in one-letter code: Large ribosomal subunit protein bL19 (114 aa).

The protein belongs to the bacterial ribosomal protein bL19 family.

Its function is as follows. This protein is located at the 30S-50S ribosomal subunit interface and may play a role in the structure and function of the aminoacyl-tRNA binding site. The chain is Large ribosomal subunit protein bL19 from Lysinibacillus sphaericus (strain C3-41).